The chain runs to 392 residues: Nicotinate phosphoribosyltransferase (392 aa).

H214 bears the Phosphohistidine; by autocatalysis mark.

It belongs to the NAPRTase family. Post-translationally, transiently phosphorylated on a His residue during the reaction cycle. Phosphorylation strongly increases the affinity for substrates and increases the rate of nicotinate D-ribonucleotide production. Dephosphorylation regenerates the low-affinity form of the enzyme, leading to product release.

It carries out the reaction nicotinate + 5-phospho-alpha-D-ribose 1-diphosphate + ATP + H2O = nicotinate beta-D-ribonucleotide + ADP + phosphate + diphosphate. It participates in cofactor biosynthesis; NAD(+) biosynthesis; nicotinate D-ribonucleotide from nicotinate: step 1/1. Its function is as follows. Catalyzes the synthesis of beta-nicotinate D-ribonucleotide from nicotinate and 5-phospho-D-ribose 1-phosphate at the expense of ATP. The protein is Nicotinate phosphoribosyltransferase of Xanthomonas axonopodis pv. citri (strain 306).